A 236-amino-acid polypeptide reads, in one-letter code: Uridylate kinase (236 aa).

Residue 10–13 (KLSG) coordinates ATP. Glycine 52 serves as a coordination point for UMP. 2 residues coordinate ATP: glycine 53 and arginine 57. UMP-binding positions include aspartate 72 and 133 to 140 (TGNPFFTT). ATP-binding residues include threonine 160, tyrosine 166, and aspartate 169.

The protein belongs to the UMP kinase family. As to quaternary structure, homohexamer.

Its subcellular location is the cytoplasm. It carries out the reaction UMP + ATP = UDP + ADP. The protein operates within pyrimidine metabolism; CTP biosynthesis via de novo pathway; UDP from UMP (UMPK route): step 1/1. With respect to regulation, inhibited by UTP. Functionally, catalyzes the reversible phosphorylation of UMP to UDP. This Cupriavidus necator (strain ATCC 17699 / DSM 428 / KCTC 22496 / NCIMB 10442 / H16 / Stanier 337) (Ralstonia eutropha) protein is Uridylate kinase.